Reading from the N-terminus, the 231-residue chain is Flagellar L-ring protein (231 aa).

The signal sequence occupies residues 1-18 (MNRLMIVSLLGIATALGG). Cys-19 is lipidated: N-palmitoyl cysteine. A lipid anchor (S-diacylglycerol cysteine) is attached at Cys-19. A disordered region spans residues 118-141 (LSLSAEYGGSRDAKGDSQAGQSNS).

It belongs to the FlgH family. The basal body constitutes a major portion of the flagellar organelle and consists of four rings (L,P,S, and M) mounted on a central rod.

The protein resides in the cell outer membrane. It localises to the bacterial flagellum basal body. Functionally, assembles around the rod to form the L-ring and probably protects the motor/basal body from shearing forces during rotation. In Pseudomonas aeruginosa (strain LESB58), this protein is Flagellar L-ring protein.